Reading from the N-terminus, the 350-residue chain is MKCSLRVWFLSMAFLLVFIMSLLFTYSHHSMATLPYLDSGTLGGTHRVKLVPGYTGQQRLVKEGLSGKSCTCSRCMGDAGTSEWFDSHFDSNISPVWTRDNMNLTPDVQRWWMMLQPQFKSHNTNEVLEKLFQIVPGENPYRFRDPQQCRRCAVVGNSGNLRGSGYGQEVDSHNFIMRMNQAPTVGFEKDVGSRTTHHFMYPESAKNLPANVSFVLVPFKALDLMWIASALSTGQIRFTYAPVKSFLRVDKEKVQIYNPAFFKYIHDRWTEHHGRYPSTGMLVLFFALHVCDEVNVYGFGADSRGNWHHYWENNRYAGEFRKTGVHDADFEAHIIDILAKASKIEVYRGN.

Topologically, residues 1–6 (MKCSLR) are cytoplasmic. Residues 7-27 (VWFLSMAFLLVFIMSLLFTYS) traverse the membrane as a helical; Signal-anchor for type II membrane protein segment. Topologically, residues 28–350 (HHSMATLPYL…ASKIEVYRGN (323 aa)) are lumenal. 3 disulfide bridges follow: Cys-70/Cys-75, Cys-72/Cys-149, and Cys-152/Cys-291. Substrate contacts are provided by Gln-116, Asn-157, and Asn-180. Asn-211 is a glycosylation site (N-linked (GlcNAc...) asparagine). Positions 240, 276, 280, 300, 309, and 326 each coordinate substrate.

The protein belongs to the glycosyltransferase 29 family. Homodimer; disulfide-linked. Homodimer formation occurs in the endoplasmic reticulum. The soluble form derives from the membrane form by proteolytic processing. In terms of processing, N-glycosylated; necessary for proper exit from endoplasmic reticulum and trafficking to the Golgi apparatus.

Its subcellular location is the golgi apparatus. The protein resides in the golgi stack membrane. The protein localises to the secreted. The catalysed reaction is a beta-D-galactosyl-(1-&gt;3)-N-acetyl-alpha-D-galactosaminyl derivative + CMP-N-acetyl-beta-neuraminate = an N-acetyl-alpha-neuraminyl-(2-&gt;3)-beta-D-galactosyl-(1-&gt;3)-N-acetyl-alpha-D-galactosaminyl derivative + CMP + H(+). It carries out the reaction a ganglioside GM1 (d18:1(4E)) + CMP-N-acetyl-beta-neuraminate = a ganglioside GD1a (d18:1(4E)) + CMP + H(+). The enzyme catalyses ganglioside GM1 (d18:1(4E)/18:0) + CMP-N-acetyl-beta-neuraminate = ganglioside GD1a (18:1(4E)/18:0) + CMP + H(+). It catalyses the reaction a ganglioside GA1 + CMP-N-acetyl-beta-neuraminate = a ganglioside GM1b + CMP + H(+). The catalysed reaction is a ganglioside GA1 (d18:1(4E)) + CMP-N-acetyl-beta-neuraminate = a ganglioside GM1b (d18:1(4E)) + CMP + H(+). It carries out the reaction a globoside GalGb4Cer + CMP-N-acetyl-beta-neuraminate = a globoside MSGG + CMP + H(+). It participates in protein modification; protein glycosylation. Its pathway is glycolipid biosynthesis. Its function is as follows. A beta-galactoside alpha2-3 sialyltransferase primarily involved in terminal sialylation of ganglio and globo series glycolipids. Catalyzes the transfer of sialic acid (N-acetyl-neuraminic acid; Neu5Ac) from the nucleotide sugar donor CMP-Neu5Ac onto acceptor Galbeta-(1-&gt;3)-GalNAc-terminated glycoconjugates through an alpha2-3 linkage. Sialylates GM1/GM1a, GA1/asialo-GM1 gangliosides to form GD1a and GM1b, respectively. Together with ST3GAL3, primarily responsible for biosynthesis of brain gangliosides that function as ligand for myelin-associated glycoprotein MAG on axons, regulating MAG expression and axonal myelin stability and regeneration. Responsible for the sialylation of the pluripotent stem cell- and cancer stem cell-associated antigen SSEA3, forming SSEA4. Sialylates with low efficiency asialofetuin, presumably onto O-glycosidically linked Galbeta-(1-&gt;3)-GalNAc-O-Ser. The protein is CMP-N-acetylneuraminate-beta-galactosamide-alpha-2,3-sialyltransferase 2 (St3gal2) of Rattus norvegicus (Rat).